Reading from the N-terminus, the 389-residue chain is Nicotinamide-nucleotide adenylyltransferase (389 aa).

A Nuclear localization signal motif is present at residues lysine 380–lysine 383.

Belongs to the eukaryotic NMN adenylyltransferase family. Abundantly expressed in neuronal and muscle cells. Present at relatively low levels at the neuromuscular junction. Expressed in the eye; present in photoreceptor cells and various neurons in the lamina cortex and medulla cortex and at low levels in the lamina.

The protein resides in the nucleus. It is found in the cytoplasm. The protein localises to the presynaptic active zone. It carries out the reaction beta-nicotinamide D-ribonucleotide + ATP + H(+) = diphosphate + NAD(+). It catalyses the reaction nicotinate beta-D-ribonucleotide + ATP + H(+) = deamido-NAD(+) + diphosphate. The protein operates within cofactor biosynthesis; NAD(+) biosynthesis; NAD(+) from nicotinamide D-ribonucleotide: step 1/1. It participates in cofactor biosynthesis; NAD(+) biosynthesis; deamido-NAD(+) from nicotinate D-ribonucleotide: step 1/1. Catalyzes the formation of NAD(+) from nicotinamide mononucleotide (NMN) and ATP. Essential for viability. Stress-response chaperone protein that prevents toxic aggregation of proteins and promotes proteasome-mediated degradation of misfolded proteins; this is independent of its NAD(+) synthesis activity. Neuroprotective in response to toxic protein aggregation, for example by overexpressed Atx-1/ataxin-1. Required for maintenance and integrity of mature neurons, protecting them from neuronal activity-induced neurodegeneration. Required for the maintenance of axonal and dendritic integrity in both central and peripheral neurons. Chaperone function and neuroprotective roles are largely independent of NAD(+) synthesis activity. Functionally, catalyzes the formation of NAD(+) from nicotinamide mononucleotide (NMN) and ATP. Has, or stimulates, chaperone holdase activity but not refoldase activity. Does not have neuroprotective properties and may stimulate apoptosis and neurodegeneration in response to toxic protein aggregates. In terms of biological role, catalyzes the formation of NAD(+) from nicotinamide mononucleotide (NMN) and ATP. Has, or stimulates, chaperone holdase and refoldase activity. Neuroprotective and reduces the toxic load of protein aggregates, preventing apoptosis and neurodegeneration. Promotes clearance of nuclear misfolded protein aggregates. The protein is Nicotinamide-nucleotide adenylyltransferase of Drosophila melanogaster (Fruit fly).